The sequence spans 470 residues: Alpha-galactosidase (470 aa).

The first 18 residues, 1 to 18 (MFSLLLLTSTALVETALG), serve as a signal peptide directing secretion. Cys42 and Cys74 are joined by a disulfide. The N-linked (GlcNAc...) asparagine glycan is linked to Asn43. Substrate contacts are provided by Asp72 and Asp73. Residue Asn82 is glycosylated (N-linked (GlcNAc...) asparagine). A disulfide bond links Cys121 and Cys151. Lys147 is a substrate binding site. Asp149 (nucleophile) is an active-site residue. Asn175 carries an N-linked (GlcNAc...) asparagine glycan. Arg205 contacts substrate. The Proton donor role is filled by Asp209. Cystine bridges form between Cys221–Cys237 and Cys223–Cys230. Gln251 serves as a coordination point for substrate. Residues Asn270, Asn388, Asn413, Asn422, Asn435, and Asn454 are each glycosylated (N-linked (GlcNAc...) asparagine).

This sequence belongs to the glycosyl hydrolase 27 family. Homotetramer.

Its subcellular location is the secreted. The catalysed reaction is Hydrolysis of terminal, non-reducing alpha-D-galactose residues in alpha-D-galactosides, including galactose oligosaccharides, galactomannans and galactolipids.. The chain is Alpha-galactosidase (MEL) from Zygotorulaspora mrakii (Zygosaccharomyces mrakii).